We begin with the raw amino-acid sequence, 322 residues long: Ribosomal RNA small subunit methyltransferase H (322 aa).

S-adenosyl-L-methionine contacts are provided by residues 47-49 (GGH), Asp67, Phe93, Asp112, and Gln119.

The protein belongs to the methyltransferase superfamily. RsmH family.

The protein resides in the cytoplasm. It carries out the reaction cytidine(1402) in 16S rRNA + S-adenosyl-L-methionine = N(4)-methylcytidine(1402) in 16S rRNA + S-adenosyl-L-homocysteine + H(+). Specifically methylates the N4 position of cytidine in position 1402 (C1402) of 16S rRNA. In Stenotrophomonas maltophilia (strain K279a), this protein is Ribosomal RNA small subunit methyltransferase H.